Reading from the N-terminus, the 937-residue chain is Valine--tRNA ligase (937 aa).

Residues 44-54 carry the 'HIGH' region motif; the sequence is PNVTGTLHMGH. Positions 548 to 552 match the 'KMSKS' region motif; sequence KMSKS. Lysine 551 provides a ligand contact to ATP. A coiled-coil region spans residues 874-937; that stretch reads AAETARLTKE…KLKAQLLKLA (64 aa).

It belongs to the class-I aminoacyl-tRNA synthetase family. ValS type 1 subfamily. As to quaternary structure, monomer.

It is found in the cytoplasm. It carries out the reaction tRNA(Val) + L-valine + ATP = L-valyl-tRNA(Val) + AMP + diphosphate. Its function is as follows. Catalyzes the attachment of valine to tRNA(Val). As ValRS can inadvertently accommodate and process structurally similar amino acids such as threonine, to avoid such errors, it has a 'posttransfer' editing activity that hydrolyzes mischarged Thr-tRNA(Val) in a tRNA-dependent manner. This is Valine--tRNA ligase from Laribacter hongkongensis (strain HLHK9).